A 192-amino-acid chain; its full sequence is Ras-like GTP-binding protein rhoA (192 aa).

12-19 (GDGACGKT) is a binding site for GTP. The Effector region signature appears at 34-42 (YVPTVFENY). GTP is bound by residues 59–63 (DTAGQ) and 117–120 (NKRD). C189 is modified (cysteine methyl ester). A lipid anchor (S-geranylgeranyl cysteine) is attached at C189. A propeptide spans 190 to 192 (MIL) (removed in mature form).

Belongs to the small GTPase superfamily. Rho family. In terms of assembly, may interact with unc-89 (via DN and PH domains). Interacts with bli-3 and memo-1. As to expression, in larvae and adults, enriched at the tip of the head where the anterior sensory organ is located and in the pharyngeal nerve ring (at protein level). In embryos, enriched at the boundaries of dorsal cells undergoing intercalation, ventral enclosure and elongation.

Its subcellular location is the cell membrane. The protein localises to the cytoplasm. It is found in the cytoskeleton. It localises to the cell cortex. With respect to regulation, GTP hydrolysis is stimulated by unc-89. Required for ventral migration of epidermal cells during ventral enclosure in the embryo and for cell elongation. Also required for ventral migration of P cells during larval development. Involved in asymmetric spindle positioning during anaphase and establishment of cell polarity during embryo development. In adults, involved in regulation of multiple processes including locomotion, pharyngeal pumping, fecundity, ovulation, defecation and body morphology. In body wall muscles, regulates organization of myosin thick filaments downstream of unc-89. Association with the oxidase bli-3 promotes ROS production and this interaction may be modulated by memo-1, in order to control the oxidative stress response and longevity. This Caenorhabditis elegans protein is Ras-like GTP-binding protein rhoA.